We begin with the raw amino-acid sequence, 170 residues long: Ankyrin repeat-containing protein C105.02c (170 aa).

2 ANK repeats span residues 46–76 and 81–116; these read LGND…NLNN and TGDT…DPLL. The disordered stretch occupies residues 150–170; that stretch reads SADVVADDDDEEEGSGESDEE. Acidic residues predominate over residues 154–170; the sequence is VADDDDEEEGSGESDEE.

It localises to the cytoplasm. It is found in the nucleus. The sequence is that of Ankyrin repeat-containing protein C105.02c from Schizosaccharomyces pombe (strain 972 / ATCC 24843) (Fission yeast).